Reading from the N-terminus, the 232-residue chain is UPF0502 protein Aave_3438 (232 aa).

It belongs to the UPF0502 family.

The protein is UPF0502 protein Aave_3438 of Paracidovorax citrulli (strain AAC00-1) (Acidovorax citrulli).